The following is a 146-amino-acid chain: MIRKRRKITRMRGSRTVGGGCSKKRRGAGHRGGRGQAGGHKHHWTWIVKYDPKHFGKYGFKRPQKLIKRLETVNLAYLDEMIPELLERGVASEEDGMVVLDVRDLGFEKVLGSGRITRPVHLKAYEFSRSATEKIEEAGGKAEVIE.

2 stretches are compositionally biased toward basic residues: residues 1–13 (MIRK…RMRG) and 22–38 (SKKR…GQAG). Residues 1 to 38 (MIRKRRKITRMRGSRTVGGGCSKKRRGAGHRGGRGQAG) are disordered.

Belongs to the universal ribosomal protein uL15 family. As to quaternary structure, part of the 50S ribosomal subunit.

Functionally, binds to the 23S rRNA. This is Large ribosomal subunit protein uL15 from Methanothermobacter thermautotrophicus (strain ATCC 29096 / DSM 1053 / JCM 10044 / NBRC 100330 / Delta H) (Methanobacterium thermoautotrophicum).